We begin with the raw amino-acid sequence, 314 residues long: Transcription factor SOX-12 (314 aa).

2 disordered regions span residues 1–40 (MVQQ…SGHI) and 101–287 (MADY…FEFP). The HMG box DNA-binding region spans 40 to 108 (IKRPMNAFMV…KHMADYPDYK (69 aa)). Over residues 149 to 159 (RASGGPLGGGA) the composition is skewed to gly residues. A compositionally biased stretch (acidic residues) spans 162–173 (PEDDDEDEEEEL). Residues 174–187 (LEVRLLETPGRELW) show a composition bias toward basic and acidic residues. Residues 191–217 (PAGRAARGPAERAQGPSGEGAAASAAS) are compositionally biased toward low complexity. The segment covering 221–243 (SEDEEPEEEEEEAATAEEGEEET) has biased composition (acidic residues). The required for transcriptional activation activity and synergistic coactivation of transcriptional activity with POU3F2 stretch occupies residues 282 to 314 (SHFEFPDYCTPEVTEMIAGDWRSSSIADLVFTY).

In terms of tissue distribution, expressed in splenic and thymic regulatory T-cells (at protein level). Expressed in embryonic molar and incisor teeth.

The protein localises to the nucleus. Functionally, transcription factor that binds to DNA at the consensus sequence 5'-ACCAAAG-3'. Acts as a transcriptional activator. Binds cooperatively with POU3F2/BRN2 or POU3F1/OCT6 to gene promoters, which enhances transcriptional activation. Involved in the differentiation of naive CD4-positive T-cells into peripherally induced regulatory T (pT reg) cells under inflammatory conditions. Binds to the promoter region of the FOXP3 gene and promotes its transcription, and might thereby contribute to pT reg cell differentiation in the spleen and lymph nodes during inflammation. Plays a redundant role with SOX4 and SOX11 in cell survival of developing tissues such as the neural tube, branchial arches and somites, thereby contributing to organogenesis. This Mus musculus (Mouse) protein is Transcription factor SOX-12 (Sox12).